The sequence spans 215 residues: Cytochrome c biogenesis ATP-binding export protein CcmA (215 aa).

The 209-residue stretch at 3–211 (LTAENLAARR…KMTGFAGVDR (209 aa)) folds into the ABC transporter domain. 35-42 (GRNGSGKS) lines the ATP pocket.

This sequence belongs to the ABC transporter superfamily. CcmA exporter (TC 3.A.1.107) family. In terms of assembly, the complex is composed of two ATP-binding proteins (CcmA) and two transmembrane proteins (CcmB).

Its subcellular location is the cell inner membrane. The catalysed reaction is heme b(in) + ATP + H2O = heme b(out) + ADP + phosphate + H(+). Its function is as follows. Part of the ABC transporter complex CcmAB involved in the biogenesis of c-type cytochromes; once thought to export heme, this seems not to be the case, but its exact role is uncertain. Responsible for energy coupling to the transport system. This is Cytochrome c biogenesis ATP-binding export protein CcmA from Rhizobium etli (strain ATCC 51251 / DSM 11541 / JCM 21823 / NBRC 15573 / CFN 42).